The primary structure comprises 152 residues: uncharacterized protein (152 aa).

This sequence belongs to the IIV-6 145L family.

This is an uncharacterized protein from Invertebrate iridescent virus 3 (IIV-3).